The sequence spans 306 residues: tRNA pseudouridine synthase B (306 aa).

Aspartate 48 serves as the catalytic Nucleophile.

This sequence belongs to the pseudouridine synthase TruB family. Type 1 subfamily.

The enzyme catalyses uridine(55) in tRNA = pseudouridine(55) in tRNA. In terms of biological role, responsible for synthesis of pseudouridine from uracil-55 in the psi GC loop of transfer RNAs. This Haemophilus influenzae (strain 86-028NP) protein is tRNA pseudouridine synthase B.